A 360-amino-acid chain; its full sequence is Protein Wnt-2 (360 aa).

The signal sequence occupies residues 1-25 (MNSPLRGIWLWLPLLLTWLTPEVSS). Disulfide bonds link C76-C87, C127-C135, C137-C157, C206-C220, C208-C215, C278-C309, C294-C304, C308-C348, C324-C339, C326-C336, and C331-C332. S212 carries the O-palmitoleoyl serine; by PORCN lipid modification. N295 carries an N-linked (GlcNAc...) asparagine glycan.

It belongs to the Wnt family. Palmitoleoylation is required for efficient binding to frizzled receptors. Depalmitoleoylation leads to Wnt signaling pathway inhibition.

The protein localises to the secreted. It is found in the extracellular space. The protein resides in the extracellular matrix. Its function is as follows. Ligand for members of the frizzled family of seven transmembrane receptors. Probable developmental protein. May be a signaling molecule which affects the development of discrete regions of tissues. Is likely to signal over only few cell diameters. The chain is Protein Wnt-2 (WNT2) from Ateles geoffroyi (Black-handed spider monkey).